We begin with the raw amino-acid sequence, 60 residues long: Cytochrome c oxidase subunit 7, mitochondrial (60 aa).

At 2–29 the chain is on the mitochondrial matrix side; it reads ANKVIQLQKIFQSSTKPLWWRHPRSALY. A helical transmembrane segment spans residues 30–53; sequence LYPFYAIFAVAVVTPLLYIPNAIR. Topologically, residues 54 to 60 are mitochondrial intermembrane; that stretch reads GIKAKKA.

The protein belongs to the cytochrome c oxidase VIIa family. In terms of assembly, component of the cytochrome c oxidase (complex IV, CIV), a multisubunit enzyme composed of 12 subunits. The complex is composed of a catalytic core of 3 subunits COX1, COX2 and COX3, encoded in the mitochondrial DNA, and 9 supernumerary subunits COX4, COX5A (or COX5B), COX6, COX7, COX8, COX9, COX12, COX13 and COX26, which are encoded in the nuclear genome. The complex exists as a monomer or a dimer and forms supercomplexes (SCs) in the inner mitochondrial membrane with a dimer of ubiquinol-cytochrome c oxidoreductase (cytochrome b-c1 complex, complex III, CIII), resulting in 2 different assemblies (supercomplexes III(2)IV and III(2)IV(2)).

It is found in the mitochondrion inner membrane. It participates in energy metabolism; oxidative phosphorylation. In terms of biological role, component of the cytochrome c oxidase, the last enzyme in the mitochondrial electron transport chain which drives oxidative phosphorylation. The respiratory chain contains 3 multisubunit complexes succinate dehydrogenase (complex II, CII), ubiquinol-cytochrome c oxidoreductase (cytochrome b-c1 complex, complex III, CIII) and cytochrome c oxidase (complex IV, CIV), that cooperate to transfer electrons derived from NADH and succinate to molecular oxygen, creating an electrochemical gradient over the inner membrane that drives transmembrane transport and the ATP synthase. Cytochrome c oxidase is the component of the respiratory chain that catalyzes the reduction of oxygen to water. Electrons originating from reduced cytochrome c in the intermembrane space (IMS) are transferred via the dinuclear copper A center (CU(A)) of COX2 and heme A of COX1 to the active site in COX1, a binuclear center (BNC) formed by heme A3 and copper B (CU(B)). The BNC reduces molecular oxygen to 2 water molecules using 4 electrons from cytochrome c in the IMS and 4 protons from the mitochondrial matrix. The sequence is that of Cytochrome c oxidase subunit 7, mitochondrial (COX7) from Saccharomyces cerevisiae (strain ATCC 204508 / S288c) (Baker's yeast).